Reading from the N-terminus, the 205-residue chain is MEVDINGVNRTNNSVPSTTEGSSPSKPDPEKPRCSSTPCSPIRRTVSGYQILHMDANFLVGFTTGEELLKLAHKCATTEENPGESLPAFRSKQLESGLSRSSRIYKARGRQYQPYEIPAVNGRRRRRMPSSGDKCNKAVPYEPYKAVHGPLPLCLLKGKRAHSKSLDYLNLDKMNIKESADTEVLQYQLQHLTLRGDRVFARNNT.

The disordered stretch occupies residues 1 to 40 (MEVDINGVNRTNNSVPSTTEGSSPSKPDPEKPRCSSTPCS). Residues 8–25 (VNRTNNSVPSTTEGSSPS) show a composition bias toward polar residues.

Belongs to the UNC119-binding protein family. Interacts with unc119 family proteins; interaction preferentially takes place when unc119 proteins are unliganded with myristoylated proteins.

It localises to the cytoplasm. Its subcellular location is the cell projection. The protein localises to the cilium. In terms of biological role, may play a role in immune regulation through regulation of the macrophage function. May also play a role in trafficking of proteins via its interaction with unc119 family cargo adapters. May play a role in ciliary membrane localization. In Xenopus tropicalis (Western clawed frog), this protein is Macrophage immunometabolism regulator (macir).